The following is a 229-amino-acid chain: MSERSPVITVDGPSGAGKGTICQLLAQHLGWHLLDSGAIYRVLALAAIHHDVELENEEALTLLAAHLDVQFLTGTEADAIKVILEGEDVTTTIRTQECSNAASKVAALPRVREALLRRQRAFSAAPGLVADGRDMGTVVFSKAPVKIFLTASAEERAQRRYNQLQDKGFDVKIDRLLAEIIERDDRDTNRAASPLVPADDALVIDTSGIGIEDVLKQVLEYVGQKITVT.

ATP is bound at residue 12–20 (GPSGAGKGT).

It belongs to the cytidylate kinase family. Type 1 subfamily.

The protein resides in the cytoplasm. The enzyme catalyses CMP + ATP = CDP + ADP. It catalyses the reaction dCMP + ATP = dCDP + ADP. The chain is Cytidylate kinase from Shewanella frigidimarina (strain NCIMB 400).